The chain runs to 306 residues: Small ribosomal subunit protein uS2 (306 aa).

S2 is subject to N-acetylserine. Laminin-binding stretches follow at residues 161-180 and 205-229; these read IPCNNKGAHSVGLMWWMLAR and RDPEEIEKEEQAAAEKATTKEEFQG. [DE]-W-[ST] repeat units lie at residues 230–232, 245–247, 276–278, 286–288, and 304–306; these read EWT, DWS, and EWS. Residues 242–306 are laminin-binding; sequence EVADWSEGVQ…EWTGTTTEWS (65 aa). The segment at 247 to 306 is disordered; that stretch reads SEGVQVPSVPIQQFTAERTDVPPAPKPTEDWSTQPASTDDWSAAPTAQASEWTGTTTEWS. The span at 276-306 shows a compositional bias: polar residues; sequence DWSTQPASTDDWSAAPTAQASEWTGTTTEWS.

It belongs to the universal ribosomal protein uS2 family. Monomer (37LRP) and homodimer (67LR). Component of the small ribosomal subunit. Mature ribosomes consist of a small (40S) and a large (60S) subunit. The 40S subunit contains about 33 different proteins and 1 molecule of RNA (18S). The 60S subunit contains about 49 different proteins and 3 molecules of RNA (28S, 5.8S and 5S). Interacts with rps21. Interacts with several laminins including at least lamb1. Interacts with mdk. In terms of processing, acylated. Acylation may be a prerequisite for conversion of the monomeric 37 kDa laminin receptor precursor (37LRP) to the mature dimeric 67 kDa laminin receptor (67LR), and may provide a mechanism for membrane association. Cleaved by stromelysin-3 (ST3) at the cell surface. Cleavage by stromelysin-3 may be a mechanism to alter cell-extracellular matrix interactions.

It localises to the cell membrane. The protein localises to the cytoplasm. It is found in the nucleus. Required for the assembly and/or stability of the 40S ribosomal subunit. Required for the processing of the 20S rRNA-precursor to mature 18S rRNA in a late step of the maturation of 40S ribosomal subunits. Also functions as a cell surface receptor for laminin. Plays a role in cell adhesion to the basement membrane and in the consequent activation of signaling transduction pathways. May play a role in cell fate determination and tissue morphogenesis. This chain is Small ribosomal subunit protein uS2 (rpsa), found in Xenopus laevis (African clawed frog).